We begin with the raw amino-acid sequence, 586 residues long: Pyruvate kinase (586 aa).

Arg32 contributes to the substrate binding site. K(+) is bound by residues Asn34, Ser36, Asp66, and Thr67. 34–37 (NFSH) contributes to the ATP binding site. The ATP site is built by Arg73 and Lys156. Position 222 (Glu222) interacts with Mg(2+). The substrate site is built by Gly245, Asp246, and Thr278. Asp246 is a binding site for Mg(2+).

It belongs to the pyruvate kinase family. The protein in the C-terminal section; belongs to the PEP-utilizing enzyme family. The cofactor is Mg(2+). K(+) is required as a cofactor.

It catalyses the reaction pyruvate + ATP = phosphoenolpyruvate + ADP + H(+). The protein operates within carbohydrate degradation; glycolysis; pyruvate from D-glyceraldehyde 3-phosphate: step 5/5. In Staphylococcus haemolyticus (strain JCSC1435), this protein is Pyruvate kinase (pyk).